A 1205-amino-acid chain; its full sequence is Nitric oxide synthase 3 (1205 aa).

A disordered region spans residues 1–73; it reads MGNLKSVGQE…PPEGPKFPRV (73 aa). The N-myristoyl glycine moiety is linked to residue Gly2. S-palmitoyl cysteine attachment occurs at residues Cys15 and Cys26. A compositionally biased stretch (gly residues) spans 15–27; it reads CGLGLGLGLGLCG. Residues 33 to 47 are compositionally biased toward pro residues; the sequence is SPAPEPSRAPAPATP. Zn(2+)-binding residues include Cys96 and Cys101. The tract at residues 100–488 is interaction with NOSIP; it reads CCLGSLVLPR…PDPWKGSATK (389 aa). Ser104 lines the (6R)-L-erythro-5,6,7,8-tetrahydrobiopterin pocket. Position 116 is a phosphoserine; by CDK5 (Ser116). Cys186 provides a ligand contact to heme b. L-arginine is bound by residues Gln249, Trp358, Tyr359, Glu363, and Asn368. 3 residues coordinate (6R)-L-erythro-5,6,7,8-tetrahydrobiopterin: Ala448, Trp449, and Phe462. Tyr477 serves as a coordination point for heme b. The tract at residues 492-512 is calmodulin-binding; it reads ITRKKTFKEVANAVKISASLM. Thr497 is modified (phosphothreonine; by AMPK and PKA). The Flavodoxin-like domain occupies 522–705; that stretch reads ATILYASETG…AFRGWAKAAF (184 aa). The FMN site is built by Ser528, Glu529, Thr530, Arg532, Ser574, and Thr575. Phosphoserine is present on residues Ser617, Ser635, and Ser640. FMN is bound by residues Ser656, Cys663, Glu689, and Gln693. An FAD-binding FR-type domain is found at 758–1004; that stretch reads RKMFQATVLS…IRGAPSFRLP (247 aa). Arg778 contacts NADP(+). Residue His800 coordinates FAD. The tract at residues 820–847 is disordered; sequence EDPPPPTESVAVEQLEKGSPGGPPPSWV. The residue at position 838 (Ser838) is a Phosphoserine. FAD-binding residues include Arg940, Tyr942, Ser943, Thr958, Ala960, Tyr964, Val977, Cys978, and Ser979. The NADP(+) site is built by Thr1018, Arg1051, Ser1080, Arg1081, Lys1087, Tyr1089, and Gln1091. Thr1177 is subject to Phosphothreonine. Phosphoserine; by AMPK, PDPK1 and PKA is present on Ser1179. The residue at position 1181 (Ser1181) is a Phosphoserine.

Belongs to the NOS family. As to quaternary structure, homodimer. Interacts with NOSIP and NOSTRIN. Interacts with HSP90AB1. Forms a complex with ASL, ASS1 and SLC7A1; the complex regulates cell-autonomous L-arginine synthesis and citrulline recycling while channeling extracellular L-arginine to nitric oxide synthesis pathway. Requires heme b as cofactor. The cofactor is FAD. FMN serves as cofactor. It depends on (6R)-L-erythro-5,6,7,8-tetrahydrobiopterin as a cofactor. Post-translationally, phosphorylation by AMPK at Ser-1179 in the presence of Ca(2+)-calmodulin (CaM) activates activity. In absence of Ca(2+)-calmodulin, AMPK also phosphorylates Thr-497, resulting in inhibition of activity. Phosphorylation of Ser-116 by CDK5 reduces activity.

Its subcellular location is the cell membrane. The protein localises to the membrane. The protein resides in the caveola. It is found in the cytoplasm. It localises to the cytoskeleton. Its subcellular location is the golgi apparatus. It catalyses the reaction 2 L-arginine + 3 NADPH + 4 O2 + H(+) = 2 L-citrulline + 2 nitric oxide + 3 NADP(+) + 4 H2O. With respect to regulation, stimulated by calcium/calmodulin. Inhibited by NOSIP and NOSTRIN. Functionally, produces nitric oxide (NO) which is implicated in vascular smooth muscle relaxation through a cGMP-mediated signal transduction pathway. NO mediates vascular endothelial growth factor (VEGF)-induced angiogenesis in coronary vessels and promotes blood clotting through the activation of platelets. The protein is Nitric oxide synthase 3 (NOS3) of Bos taurus (Bovine).